Consider the following 452-residue polypeptide: Probable 1,4-beta-D-glucan cellobiohydrolase A (452 aa).

Positions 1–17 (MHQRALLFSALAVAANA) are cleaved as a signal peptide. A glycan (N-linked (GlcNAc...) asparagine) is linked at Asn-81. The active-site Nucleophile is Glu-226. Residue Glu-231 is the Proton donor of the active site. N-linked (GlcNAc...) asparagine glycosylation occurs at Asn-284. Residues 406 to 432 (DPSKPGVARGTCEHGAGDPEKVESQHP) are disordered. Over residues 416 to 431 (TCEHGAGDPEKVESQH) the composition is skewed to basic and acidic residues.

It belongs to the glycosyl hydrolase 7 (cellulase C) family.

It is found in the secreted. The enzyme catalyses Hydrolysis of (1-&gt;4)-beta-D-glucosidic linkages in cellulose and cellotetraose, releasing cellobiose from the non-reducing ends of the chains.. The biological conversion of cellulose to glucose generally requires three types of hydrolytic enzymes: (1) Endoglucanases which cut internal beta-1,4-glucosidic bonds; (2) Exocellobiohydrolases that cut the disaccharide cellobiose from the non-reducing end of the cellulose polymer chain; (3) Beta-1,4-glucosidases which hydrolyze the cellobiose and other short cello-oligosaccharides to glucose. This Neosartorya fischeri (strain ATCC 1020 / DSM 3700 / CBS 544.65 / FGSC A1164 / JCM 1740 / NRRL 181 / WB 181) (Aspergillus fischerianus) protein is Probable 1,4-beta-D-glucan cellobiohydrolase A (cbhA).